The sequence spans 194 residues: Peptidyl-tRNA hydrolase (194 aa).

TRNA is bound at residue Tyr17. His22 functions as the Proton acceptor in the catalytic mechanism. TRNA contacts are provided by Tyr68, Asn70, and Asn116.

This sequence belongs to the PTH family. In terms of assembly, monomer.

The protein localises to the cytoplasm. It catalyses the reaction an N-acyl-L-alpha-aminoacyl-tRNA + H2O = an N-acyl-L-amino acid + a tRNA + H(+). Functionally, hydrolyzes ribosome-free peptidyl-tRNAs (with 1 or more amino acids incorporated), which drop off the ribosome during protein synthesis, or as a result of ribosome stalling. In terms of biological role, catalyzes the release of premature peptidyl moieties from peptidyl-tRNA molecules trapped in stalled 50S ribosomal subunits, and thus maintains levels of free tRNAs and 50S ribosomes. In Pseudomonas entomophila (strain L48), this protein is Peptidyl-tRNA hydrolase.